Consider the following 148-residue polypeptide: Transcriptional regulator MraZ (148 aa).

SpoVT-AbrB domains follow at residues 5–53 (ETAI…VEKE) and 82–125 (SALL…SEQA).

The protein belongs to the MraZ family. As to quaternary structure, forms oligomers.

The protein localises to the cytoplasm. Its subcellular location is the nucleoid. This Xylella fastidiosa (strain 9a5c) protein is Transcriptional regulator MraZ.